Reading from the N-terminus, the 335-residue chain is DNA polymerase beta (335 aa).

A Glycyl lysine isopeptide (Lys-Gly) (interchain with G-Cter in ubiquitin) cross-link involves residue Lys41. A K(+)-binding site is contributed by Lys60. Residue Lys60 participates in Na(+) binding. A Glycyl lysine isopeptide (Lys-Gly) (interchain with G-Cter in ubiquitin) cross-link involves residue Lys61. K(+)-binding residues include Leu62 and Val65. Na(+) is bound by residues Leu62 and Val65. Lys72 (nucleophile; Schiff-base intermediate with DNA; for 5'-dRP lyase activity) is an active-site residue. Lys72 is modified (N6-acetyllysine). Lys81 participates in a covalent cross-link: Glycyl lysine isopeptide (Lys-Gly) (interchain with G-Cter in ubiquitin). At Arg83 the chain carries Omega-N-methylarginine; by PRMT6. K(+) contacts are provided by Thr101, Val103, and Ile106. Na(+) is bound by residues Thr101, Val103, and Ile106. Arg149 is an a 2'-deoxyribonucleoside 5'-triphosphate binding site. Arg152 is modified (omega-N-methylarginine; by PRMT6). Residues Ser180, Arg183, Gly189, and Asp190 each coordinate a 2'-deoxyribonucleoside 5'-triphosphate. Residues 183–192 (RGAESSGDMD) form a DNA-binding region. The Mg(2+) site is built by Asp190, Asp192, and Asp256.

The protein belongs to the DNA polymerase type-X family. As to quaternary structure, monomer. Binds single-stranded DNA (ssDNA). Interacts with APEX1, LIG1, LIG3, FEN1, PCNA and XRCC1. Interacts with HUWE1/ARF-BP1, STUB1/CHIP and USP47. Interacts with FAM168A. It depends on Mg(2+) as a cofactor. Methylation by PRMT6 stimulates the polymerase activity by enhancing DNA binding and processivity. Post-translationally, ubiquitinated at Lys-41, Lys-61 and Lys-81: monoubiquitinated by HUWE1/ARF-BP1. Monoubiquitinated protein is then the target of STUB1/CHIP, which catalyzes polyubiquitination from monoubiquitin, leading to degradation by the proteasome. USP47 mediates the deubiquitination of monoubiquitinated protein, preventing polyubiquitination by STUB1/CHIP and its subsequent degradation.

The protein localises to the nucleus. It localises to the cytoplasm. The catalysed reaction is DNA(n) + a 2'-deoxyribonucleoside 5'-triphosphate = DNA(n+1) + diphosphate. It carries out the reaction a 5'-end 2'-deoxyribose-2'-deoxyribonucleotide-DNA = (2E,4S)-4-hydroxypenten-2-al-5-phosphate + a 5'-end 5'-phospho-2'-deoxyribonucleoside-DNA + H(+). The enzyme catalyses 2'-deoxyribonucleotide-(2'-deoxyribose 5'-phosphate)-2'-deoxyribonucleotide-DNA = a 3'-end 2'-deoxyribonucleotide-(2,3-dehydro-2,3-deoxyribose 5'-phosphate)-DNA + a 5'-end 5'-phospho-2'-deoxyribonucleoside-DNA + H(+). Repair polymerase that plays a key role in base-excision repair. During this process, the damaged base is excised by specific DNA glycosylases, the DNA backbone is nicked at the abasic site by an apurinic/apyrimidic (AP) endonuclease, and POLB removes 5'-deoxyribose-phosphate from the preincised AP site acting as a 5'-deoxyribose-phosphate lyase (5'-dRP lyase); through its DNA polymerase activity, it adds one nucleotide to the 3' end of the arising single-nucleotide gap. Conducts 'gap-filling' DNA synthesis in a stepwise distributive fashion rather than in a processive fashion as for other DNA polymerases. It is also able to cleave sugar-phosphate bonds 3' to an intact AP site, acting as an AP lyase. This chain is DNA polymerase beta (Polb), found in Rattus norvegicus (Rat).